The following is a 1613-amino-acid chain: NAD-specific glutamate dehydrogenase (1613 aa).

The active site involves Lys-849.

Belongs to the Glu/Leu/Phe/Val dehydrogenases family.

It catalyses the reaction L-glutamate + NAD(+) + H2O = 2-oxoglutarate + NH4(+) + NADH + H(+). Functionally, involved in arginine catabolism by converting L-glutamate, into 2-oxoglutarate, which is then channeled into the tricarboxylic acid cycle. This is NAD-specific glutamate dehydrogenase from Halomonas elongata (strain ATCC 33173 / DSM 2581 / NBRC 15536 / NCIMB 2198 / 1H9).